A 466-amino-acid chain; its full sequence is Cysteine--tRNA ligase (466 aa).

C28 provides a ligand contact to Zn(2+). A 'HIGH' region motif is present at residues 30–40; the sequence is PTVYNYIHIGN. Zn(2+) is bound by residues C208, H233, and E237. Positions 265–269 match the 'KMSKS' region motif; that stretch reads KMSKS. ATP is bound at residue K268.

This sequence belongs to the class-I aminoacyl-tRNA synthetase family. Monomer. Zn(2+) serves as cofactor.

It is found in the cytoplasm. It catalyses the reaction tRNA(Cys) + L-cysteine + ATP = L-cysteinyl-tRNA(Cys) + AMP + diphosphate. This Staphylococcus saprophyticus subsp. saprophyticus (strain ATCC 15305 / DSM 20229 / NCIMB 8711 / NCTC 7292 / S-41) protein is Cysteine--tRNA ligase.